Reading from the N-terminus, the 147-residue chain is Phosphoribosyl-AMP cyclohydrolase (147 aa).

A Mg(2+)-binding site is contributed by Asp-97. Cys-98 lines the Zn(2+) pocket. Residues Asp-99 and Asp-101 each coordinate Mg(2+). Residues Cys-114 and Cys-121 each coordinate Zn(2+).

The protein belongs to the PRA-CH family. As to quaternary structure, homodimer. Mg(2+) is required as a cofactor. Requires Zn(2+) as cofactor.

It is found in the cytoplasm. It carries out the reaction 1-(5-phospho-beta-D-ribosyl)-5'-AMP + H2O = 1-(5-phospho-beta-D-ribosyl)-5-[(5-phospho-beta-D-ribosylamino)methylideneamino]imidazole-4-carboxamide. Its pathway is amino-acid biosynthesis; L-histidine biosynthesis; L-histidine from 5-phospho-alpha-D-ribose 1-diphosphate: step 3/9. In terms of biological role, catalyzes the hydrolysis of the adenine ring of phosphoribosyl-AMP. This chain is Phosphoribosyl-AMP cyclohydrolase, found in Hydrogenovibrio crunogenus (strain DSM 25203 / XCL-2) (Thiomicrospira crunogena).